A 328-amino-acid chain; its full sequence is Interferon regulatory factor 1 (328 aa).

Residues 5-113 constitute a DNA-binding region (IRF tryptophan pentad repeat); the sequence is RMRMRPWLEM…SAVRVYRMLP (109 aa). Lysine 78 is subject to N6-acetyllysine. A disordered region spans residues 92-164; it reads EEVKDQSRNK…STLPDDHSSY (73 aa). The span at 141–157 shows a compositional bias: low complexity; it reads GDSSPDTLSDGLSSSTL. Glycyl lysine isopeptide (Lys-Gly) (interchain with G-Cter in SUMO) cross-links involve residues lysine 276 and lysine 300.

It belongs to the IRF family. In terms of assembly, monomer. Homodimer. Interacts with EP300. Interacts with MYD88. Interacts with PIAS3. Interacts with SPOP. Post-translationally, phosphorylated by CK2 and this positively regulates its activity. Sumoylation represses the transcriptional activity and displays enhanced resistance to protein degradation. Sumoylated by UBE2I/UBC9 and SUMO1. Inactivates the tumor suppressor activity. Elevated levels in tumor cells. Major site is Lys-276. Sumoylation is enhanced by PIAS3. Desumoylated by SENP1 in tumor cells and appears to compete with ubiquitination on C-terminal sites. In terms of processing, ubiquitinated in a SPOP-depedent manner. Appears to compete with sumoylation on C-terminal sites.

The protein localises to the nucleus. It localises to the cytoplasm. Activated by MYD88. Transcriptional regulator which displays a remarkable functional diversity in the regulation of cellular responses. Regulates transcription of IFN and IFN-inducible genes, host response to viral and bacterial infections, regulation of many genes expressed during hematopoiesis, inflammation, immune responses and cell proliferation and differentiation, regulation of the cell cycle and induction of growth arrest and programmed cell death following DNA damage. Stimulates both innate and acquired immune responses through the activation of specific target genes and can act as a transcriptional activator and repressor regulating target genes by binding to an interferon-stimulated response element (ISRE) in their promoters. Has an essentail role in IFNG-dependent immunity to mycobacteria. Binds to a consensus sequence in gene promoters. Its target genes for transcriptional activation activity include: genes involved in anti-viral response, such as IFN-alpha/beta, RIGI, TNFSF10/TRAIL, ZBP1, OAS1/2, PIAS1/GBP, EIF2AK2/PKR and RSAD2/viperin; antibacterial response, such as GBP2, GBP5 and NOS2/INOS; anti-proliferative response, such as p53/TP53, LOX and CDKN1A; apoptosis, such as BBC3/PUMA, CASP1, CASP7 and CASP8; immune response, such as IL7, IL12A/B and IL15, PTGS2/COX2 and CYBB; DNA damage responses and DNA repair, such as POLQ/POLH; MHC class I expression, such as TAP1, PSMB9/LMP2, PSME1/PA28A, PSME2/PA28B and B2M and MHC class II expression, such as CIITA; metabolic enzymes, such as ACOD1/IRG1. Represses genes involved in anti-proliferative response, such as BIRC5/survivin, CCNB1, CCNE1, CDK1, CDK2 and CDK4 and in immune response, such as FOXP3, IL4, ANXA2 and TLR4. Stimulates p53/TP53-dependent transcription through enhanced recruitment of EP300 leading to increased acetylation of p53/TP53. Plays an important role in immune response directly affecting NK maturation and activity, macrophage production of IL12, Th1 development and maturation of CD8+ T-cells. Also implicated in the differentiation and maturation of dendritic cells and in the suppression of regulatory T (Treg) cells development. Acts as a tumor suppressor and plays a role not only in antagonism of tumor cell growth but also in stimulating an immune response against tumor cells. The sequence is that of Interferon regulatory factor 1 (Irf1) from Rattus norvegicus (Rat).